The following is a 271-amino-acid chain: Autophagy-related protein 27 (271 aa).

An N-terminal signal peptide occupies residues 1 to 19; it reads MVSKTWICGFISIITVVQA. In terms of domain architecture, MRH spans 20-166; the sequence is LSCEKHDVLK…TLKGPSGCLK (147 aa). The Lumenal segment spans residues 20-199; that stretch reads LSCEKHDVLK…PAKKAGGTSW (180 aa). 3 disulfide bridges follow: Cys22–Cys60, Cys71–Cys78, and Cys135–Cys164. The interval 161-194 is disordered; sequence PSGCLKSKDDDKKNGDGDNGKDGDSEGKKPAKKA. Basic and acidic residues predominate over residues 166–189; sequence KSKDDDKKNGDGDNGKDGDSEGKK. A helical transmembrane segment spans residues 200–220; sequence FTWLFLYALLFTLIYLMVVSF. Residues 221 to 271 lie on the Cytoplasmic side of the membrane; sequence LNTRGGSFQDFRAEFIQRSTQFLTSLPEFCKEVVSRILGRSTAQRGGYSAV.

Belongs to the ATG27 family. Forms a complex with ATG9 and ATG23.

The protein localises to the cytoplasmic vesicle membrane. It localises to the golgi apparatus membrane. Its subcellular location is the mitochondrion membrane. It is found in the preautophagosomal structure membrane. Effector of VPS34 phosphatidylinositol 3-phosphate kinase signaling. Regulates the cytoplasm to vacuole transport (Cvt) vesicle formation. Plays a role in ATG protein retrieval from the pre-autophagosomal structure (PAS) and is especially required for autophagy-dependent cycling of ATG9. The chain is Autophagy-related protein 27 (ATG27) from Saccharomyces cerevisiae (strain ATCC 204508 / S288c) (Baker's yeast).